Consider the following 186-residue polypeptide: Elongation factor P (186 aa).

Belongs to the elongation factor P family.

The protein localises to the cytoplasm. It functions in the pathway protein biosynthesis; polypeptide chain elongation. Its function is as follows. Involved in peptide bond synthesis. Stimulates efficient translation and peptide-bond synthesis on native or reconstituted 70S ribosomes in vitro. Probably functions indirectly by altering the affinity of the ribosome for aminoacyl-tRNA, thus increasing their reactivity as acceptors for peptidyl transferase. This Neisseria gonorrhoeae (strain ATCC 700825 / FA 1090) protein is Elongation factor P.